The following is a 298-amino-acid chain: Quinolinate synthase (298 aa).

Residues H19 and S36 each contribute to the iminosuccinate site. Residue C81 participates in [4Fe-4S] cluster binding. Residues 107–109 and S124 contribute to the iminosuccinate site; that span reads YVN. Position 168 (C168) interacts with [4Fe-4S] cluster. Iminosuccinate-binding positions include 193–195 and T210; that span reads HPE. [4Fe-4S] cluster is bound at residue C254.

This sequence belongs to the quinolinate synthase family. Type 2 subfamily. Requires [4Fe-4S] cluster as cofactor.

It is found in the cytoplasm. It catalyses the reaction iminosuccinate + dihydroxyacetone phosphate = quinolinate + phosphate + 2 H2O + H(+). The protein operates within cofactor biosynthesis; NAD(+) biosynthesis; quinolinate from iminoaspartate: step 1/1. Its activity is regulated as follows. Inhibited by 4,5 dithiohydroxyphthalic acid (DTHPA) analogs, which bind to the catalytic iron site of the [4Fe-4S] cluster. Functionally, catalyzes the condensation of iminoaspartate with dihydroxyacetone phosphate to form quinolinate. The chain is Quinolinate synthase from Thermotoga maritima (strain ATCC 43589 / DSM 3109 / JCM 10099 / NBRC 100826 / MSB8).